The sequence spans 362 residues: Malate dehydrogenase (362 aa).

The protein belongs to the LDH2/MDH2 oxidoreductase family. As to quaternary structure, homodimer.

The protein localises to the cytoplasm. It catalyses the reaction (S)-malate + NAD(+) = oxaloacetate + NADH + H(+). The protein is Malate dehydrogenase (mdh) of Pyrococcus abyssi (strain GE5 / Orsay).